The primary structure comprises 33 residues: Cytochrome b6-f complex subunit 6 (33 aa).

The helical transmembrane segment at 4–24 (ITIISYFGFLLASIIFTLVLF) threads the bilayer.

This sequence belongs to the PetL family. As to quaternary structure, the 4 large subunits of the cytochrome b6-f complex are cytochrome b6, subunit IV (17 kDa polypeptide, PetD), cytochrome f and the Rieske protein, while the 4 small subunits are PetG, PetL, PetM and PetN. The complex functions as a dimer.

It localises to the plastid. It is found in the chloroplast thylakoid membrane. Its function is as follows. Component of the cytochrome b6-f complex, which mediates electron transfer between photosystem II (PSII) and photosystem I (PSI), cyclic electron flow around PSI, and state transitions. PetL is important for photoautotrophic growth as well as for electron transfer efficiency and stability of the cytochrome b6-f complex. This is Cytochrome b6-f complex subunit 6 from Pinus thunbergii (Japanese black pine).